The following is a 69-amino-acid chain: Putative membrane protein insertion efficiency factor (69 aa).

The protein belongs to the UPF0161 family.

It is found in the cell membrane. In terms of biological role, could be involved in insertion of integral membrane proteins into the membrane. This Thermoanaerobacter pseudethanolicus (strain ATCC 33223 / 39E) (Clostridium thermohydrosulfuricum) protein is Putative membrane protein insertion efficiency factor.